Reading from the N-terminus, the 113-residue chain is Carrot ABA-induced in somatic embryos 3 (113 aa).

Basic and acidic residues-rich tracts occupy residues 1 to 17 (MASGQEKRSELDARAKQ), 32 to 52 (EAQEHLAEGRSKGGHTRKEQL), and 65 to 77 (GETRREQMGKEGY). A disordered region spans residues 1–113 (MASGQEKRSE…IDQSKFRTKS (113 aa)).

This sequence belongs to the small hydrophilic plant seed protein family. As to expression, expressed in embryogenic cells, somatic embryos and seeds at the later stages of development. Not detected in leaves.

The polypeptide is Carrot ABA-induced in somatic embryos 3 (Daucus carota (Wild carrot)).